The following is an 83-amino-acid chain: Small ribosomal subunit protein uS17 (83 aa).

This sequence belongs to the universal ribosomal protein uS17 family. In terms of assembly, part of the 30S ribosomal subunit.

Functionally, one of the primary rRNA binding proteins, it binds specifically to the 5'-end of 16S ribosomal RNA. In Campylobacter hominis (strain ATCC BAA-381 / DSM 21671 / CCUG 45161 / LMG 19568 / NCTC 13146 / CH001A), this protein is Small ribosomal subunit protein uS17.